The sequence spans 42 residues: Delta-hexatoxin-Iw1a (42 aa).

Disulfide bonds link Cys1-Cys15, Cys8-Cys20, Cys14-Cys31, and Cys16-Cys42.

The protein belongs to the neurotoxin 06 (delta-actx) family. As to expression, expressed by the venom gland.

The protein resides in the secreted. In terms of biological role, inhibits tetrodotoxin-sensitive sodium channels by binding to site 3. It slows the inactivation, causes a prolongation of action potential duration resulting in repetitive firing in autonomic and motor nerve fibers. Does not depolarize the resting potential. Does not affect tetrodotoxin-resistant sodium channels. This lethal neurotoxin is active on both insect and mammalian voltage-gated sodium channels (Nav). The chain is Delta-hexatoxin-Iw1a from Illawarra wisharti (Illawarra funnel-web spider).